A 377-amino-acid polypeptide reads, in one-letter code: Dihydroorotate dehydrogenase (quinone) (377 aa).

FMN-binding positions include 78-82 (AGCDK) and Ala102. Substrate is bound at residue Lys82. A substrate-binding site is contributed by 127–130 (NRLG). Asn159 and Asn192 together coordinate FMN. Position 192 (Asn192) interacts with substrate. Residue Ser195 is the Nucleophile of the active site. A substrate-binding site is contributed by Asn197. 2 residues coordinate FMN: Lys230 and Thr258. 259–260 (NT) lines the substrate pocket. FMN contacts are provided by residues Gly288, Gly317, and 338–339 (YT).

This sequence belongs to the dihydroorotate dehydrogenase family. Type 2 subfamily. Monomer. FMN is required as a cofactor.

The protein localises to the cell membrane. It carries out the reaction (S)-dihydroorotate + a quinone = orotate + a quinol. The protein operates within pyrimidine metabolism; UMP biosynthesis via de novo pathway; orotate from (S)-dihydroorotate (quinone route): step 1/1. Its function is as follows. Catalyzes the conversion of dihydroorotate to orotate with quinone as electron acceptor. The chain is Dihydroorotate dehydrogenase (quinone) from Rippkaea orientalis (strain PCC 8801 / RF-1) (Cyanothece sp. (strain PCC 8801)).